A 1220-amino-acid chain; its full sequence is Myosin-2 (1220 aa).

Residues 1-12 show a composition bias toward polar residues; sequence MMLSASPNTLAK. Disordered regions lie at residues 1–54 and 68–95; these read MMLS…ARRS and QNGS…RKEK. Residues 20 to 33 show a composition bias toward basic and acidic residues; that stretch reads ESLRQKDECDRPKD. Residues 40–54 are compositionally biased toward low complexity; it reads SRPNSRARLPSARRS. Positions 82–95 are enriched in basic and acidic residues; sequence ESERKEEGVKRKEK. Positions 160-209 constitute a Myosin N-terminal SH3-like domain; that stretch reads KKKLRVWCRVSNGQWQLGKIQSTSADTSLVMLSTANVVKVSTEELFPANP. The 667-residue stretch at 213–879 folds into the Myosin motor domain; sequence EGVEDLIQLS…QIGIFEDRRK (667 aa). Residues 304–311 and 353–361 each bind ATP; these read GESGAGKT and NANSSRFGK. 2 actin-binding regions span residues 638-672 and 759-781; these read LIEK…KQHL and LFKL…KPNS. IQ domains follow at residues 881 to 910, 904 to 933, and 942 to 971; these read VLQG…VTLV, MRKV…FHAD, and ELSA…QKEL. 2 disordered regions span residues 968–1007 and 1075–1118; these read QKEL…MSDL and SITG…NGNT. 2 stretches are compositionally biased toward polar residues: residues 997–1006 and 1098–1118; these read PQVQPTSMSD and TMST…NGNT. Residues 1003–1071 adopt a coiled-coil conformation; sequence SMSDLQKRIL…MSLAAARKSL (69 aa).

Belongs to the TRAFAC class myosin-kinesin ATPase superfamily. Myosin family. Plant myosin class VIII subfamily. In terms of assembly, homodimer. In terms of tissue distribution, expressed in flowers, leaves and roots.

It is found in the cell junction. Its subcellular location is the plasmodesma. The protein localises to the endosome. Its function is as follows. Myosin heavy chain that is required for the cell cycle-regulated transport of various organelles and proteins for their segregation. Functions by binding with its tail domain to receptor proteins on organelles and exerting force with its N-terminal motor domain against actin filaments, thereby transporting its cargo along polarized actin cables. Involved in endocytosis via its action in endosomal trafficking. The sequence is that of Myosin-2 (VIII-2) from Arabidopsis thaliana (Mouse-ear cress).